A 451-amino-acid chain; its full sequence is MLKYFGTDGVRGVANAGLTPEMAFKLGRDGGYVLTKDKKDGERAKVLVSRDTRISGQMLEYALISGLLSVGIEVLEVGVITTPGLSYLVRAQGADAGVQISASHNPVEDNGIKFFGSDGLKLSDAKEEEIEKLIDAPEDKLPRPSAEGLGTVTNYHEGASKYLQFIENTLPEELSGIKVVVDGANGAASALISRLFADMGVDFTTIATHPDGLNINDHVGATHTKKLQEEVVKQGAQLGLAFDGDADRCIAVDENGNEVDGDHIMYVIGSYLADHGRLKKDTIVTTVMSNLGFTKALERRGLKNIRTQVGDRYVSEEMRANGYNLGGEQSGHVIISDYHNTGDGMLTGLHLLYVMKDTGKSLSELLSDFKEYPQRLINVPVENKKDWKEHKRITEAIEKVEKELSDEGRIFVRPSGTQSLLRVMTEAPTQELADKYCEEVAKVVEEEMGSN.

Residue Ser103 is the Phosphoserine intermediate of the active site. 4 residues coordinate Mg(2+): Ser103, Asp243, Asp245, and Asp247. Residue Ser103 is modified to Phosphoserine.

This sequence belongs to the phosphohexose mutase family. Requires Mg(2+) as cofactor. In terms of processing, activated by phosphorylation.

The enzyme catalyses alpha-D-glucosamine 1-phosphate = D-glucosamine 6-phosphate. In terms of biological role, catalyzes the conversion of glucosamine-6-phosphate to glucosamine-1-phosphate. The polypeptide is Phosphoglucosamine mutase (Lactobacillus johnsonii (strain CNCM I-12250 / La1 / NCC 533)).